The sequence spans 350 residues: Probable dual-specificity RNA methyltransferase RlmN (350 aa).

Glu-93 serves as the catalytic Proton acceptor. In terms of domain architecture, Radical SAM core spans 99-327; sequence SSKRLTVCVS…VSVRYSRGVQ (229 aa). The cysteines at positions 106 and 332 are disulfide-linked. 3 residues coordinate [4Fe-4S] cluster: Cys-113, Cys-117, and Cys-120. S-adenosyl-L-methionine is bound by residues 160–161, Ser-190, 213–215, and Asn-289; these read GE and SLH. The S-methylcysteine intermediate role is filled by Cys-332.

This sequence belongs to the radical SAM superfamily. RlmN family. [4Fe-4S] cluster is required as a cofactor.

It is found in the cytoplasm. The catalysed reaction is adenosine(2503) in 23S rRNA + 2 reduced [2Fe-2S]-[ferredoxin] + 2 S-adenosyl-L-methionine = 2-methyladenosine(2503) in 23S rRNA + 5'-deoxyadenosine + L-methionine + 2 oxidized [2Fe-2S]-[ferredoxin] + S-adenosyl-L-homocysteine. The enzyme catalyses adenosine(37) in tRNA + 2 reduced [2Fe-2S]-[ferredoxin] + 2 S-adenosyl-L-methionine = 2-methyladenosine(37) in tRNA + 5'-deoxyadenosine + L-methionine + 2 oxidized [2Fe-2S]-[ferredoxin] + S-adenosyl-L-homocysteine. Functionally, specifically methylates position 2 of adenine 2503 in 23S rRNA and position 2 of adenine 37 in tRNAs. This is Probable dual-specificity RNA methyltransferase RlmN from Synechocystis sp. (strain ATCC 27184 / PCC 6803 / Kazusa).